The sequence spans 708 residues: Outer capsid protein mu-1 (708 aa).

G2 carries N-myristoyl glycine; by host lipidation. Residues N3, N12, N81, N110, N458, N482, N528, and N659 are each glycosylated (N-linked (GlcNAc...) asparagine; by host). A disordered region spans residues 675–708 (PKPDCPTSGDSGESSNRRVKRDSYAGVVKRGYTR).

It belongs to the orthoreovirus mu-1 protein family. In terms of assembly, heterohexamer of three sigma-3 and three Mu-1 proteins. Post-translationally, cleaved during the endosomal proteolytic disassembly of the outer capsid. Mu-1 is proteolytically cleaved into mu-1N and mu-1C during the maturation step to generate the ISVP. Cleavage of mu-1 to mu-1C is dependent on myristoylation and binding to sigma-3 protein. Mu-1C is further cleaved into delta (59 kDa), and phi (13 kDa) segments during entry into the host cell cytoplasm. In terms of processing, mu-1 and mu-1N are N-terminally myristoylated. This acylation is essential for the membrane fusion activity.

It localises to the virion. The protein localises to the host cell membrane. The protein resides in the host endoplasmic reticulum. It is found in the host mitochondrion. In terms of biological role, major outer capsid protein involved in host cell membrane penetration. In the endocytic compartment, outer-capsid protein sigma-3 is removed by cathepsin proteases, which exposes the viral membrane-penetration protein mu-1. Both myristoylated peptides mu-1N and phi are released during infectious subvirion particles (ISVP) formation in the endosome. They associate with host membranes and mu-1N induces permeabilization and delivery of transcriptionally active viral particles into the host cell cytoplasm. Seems to induce apoptosis in the host cell. Its function is as follows. The viral outer shell polypeptides, of which mu-1 is one, impose structural constraints that prevent elongation of nascent transcripts by the RNA-dependent RNA polymerase lambda-3. In Mammalia (T3D), this protein is Outer capsid protein mu-1 (M2).